The primary structure comprises 175 residues: MSGKELNKIVAAILFASLIAMMVGFVANILYKPTLELQHRGYSVAVQESSENQNTTASEQAPVNIPELMKTANADNGREIAKKCLVCHSLDKDGPNKLGPHLWDVAGRPKASIADYKYSPALSKLGGVWDDDSLFAFLHKPSSYAPGTKMSFAGISKPQDIADVILFLKTYVHDK.

At 1–8 (MSGKELNK) the chain is on the cytoplasmic side. Residues 9–29 (IVAAILFASLIAMMVGFVANI) form a helical; Signal-anchor membrane-spanning segment. Residues 30–175 (LYKPTLELQH…LFLKTYVHDK (146 aa)) lie on the Periplasmic side of the membrane. Residues C84, C87, H88, and M150 each coordinate heme c.

It belongs to the cytochrome c family. Binds 1 heme c group covalently per subunit.

It is found in the cell membrane. In terms of biological role, may be involved in electron transfer from bc1 complex to aa3. This chain is Cytochrome c homolog (cycM), found in Rickettsia felis (strain ATCC VR-1525 / URRWXCal2) (Rickettsia azadi).